The chain runs to 393 residues: NAD(P)H-quinone oxidoreductase subunit H, chloroplastic (393 aa).

Belongs to the complex I 49 kDa subunit family. In terms of assembly, NDH is composed of at least 16 different subunits, 5 of which are encoded in the nucleus.

Its subcellular location is the plastid. It localises to the chloroplast thylakoid membrane. It carries out the reaction a plastoquinone + NADH + (n+1) H(+)(in) = a plastoquinol + NAD(+) + n H(+)(out). The enzyme catalyses a plastoquinone + NADPH + (n+1) H(+)(in) = a plastoquinol + NADP(+) + n H(+)(out). In terms of biological role, NDH shuttles electrons from NAD(P)H:plastoquinone, via FMN and iron-sulfur (Fe-S) centers, to quinones in the photosynthetic chain and possibly in a chloroplast respiratory chain. The immediate electron acceptor for the enzyme in this species is believed to be plastoquinone. Couples the redox reaction to proton translocation, and thus conserves the redox energy in a proton gradient. This Nandina domestica (Heavenly bamboo) protein is NAD(P)H-quinone oxidoreductase subunit H, chloroplastic.